The chain runs to 351 residues: Methylthioribose-1-phosphate isomerase (351 aa).

Residues 55 to 57, Arg95, and Gln202 contribute to the substrate site; that span reads RGA. The active-site Proton donor is the Asp243. 253-254 is a substrate binding site; sequence NK.

The protein belongs to the eIF-2B alpha/beta/delta subunits family. MtnA subfamily.

It carries out the reaction 5-(methylsulfanyl)-alpha-D-ribose 1-phosphate = 5-(methylsulfanyl)-D-ribulose 1-phosphate. The protein operates within amino-acid biosynthesis; L-methionine biosynthesis via salvage pathway; L-methionine from S-methyl-5-thio-alpha-D-ribose 1-phosphate: step 1/6. In terms of biological role, catalyzes the interconversion of methylthioribose-1-phosphate (MTR-1-P) into methylthioribulose-1-phosphate (MTRu-1-P). This Marinobacter nauticus (strain ATCC 700491 / DSM 11845 / VT8) (Marinobacter aquaeolei) protein is Methylthioribose-1-phosphate isomerase.